A 546-amino-acid chain; its full sequence is CTP synthase (546 aa).

Positions 1–266 (MAKYYIFITG…DSYVCDRFCI (266 aa)) are amidoligase domain. CTP is bound at residue Ser-14. Ser-14 provides a ligand contact to UTP. ATP contacts are provided by residues 15–20 (SLGKGI) and Asp-72. Mg(2+) is bound by residues Asp-72 and Glu-140. CTP-binding positions include 147–149 (DIE), 187–192 (KTKPTQ), and Lys-223. Residues 187–192 (KTKPTQ) and Lys-223 contribute to the UTP site. Positions 291 to 544 (NIGIIGKYTE…VKAAFDFKNK (254 aa)) constitute a Glutamine amidotransferase type-1 domain. Residue Gly-352 participates in L-glutamine binding. Catalysis depends on Cys-379, which acts as the Nucleophile; for glutamine hydrolysis. Residues 380 to 383 (LGMQ), Glu-403, and Arg-470 each bind L-glutamine. Active-site residues include His-517 and Glu-519.

This sequence belongs to the CTP synthase family. As to quaternary structure, homotetramer.

The catalysed reaction is UTP + L-glutamine + ATP + H2O = CTP + L-glutamate + ADP + phosphate + 2 H(+). The enzyme catalyses L-glutamine + H2O = L-glutamate + NH4(+). It carries out the reaction UTP + NH4(+) + ATP = CTP + ADP + phosphate + 2 H(+). Its pathway is pyrimidine metabolism; CTP biosynthesis via de novo pathway; CTP from UDP: step 2/2. Allosterically activated by GTP, when glutamine is the substrate; GTP has no effect on the reaction when ammonia is the substrate. The allosteric effector GTP functions by stabilizing the protein conformation that binds the tetrahedral intermediate(s) formed during glutamine hydrolysis. Inhibited by the product CTP, via allosteric rather than competitive inhibition. Its function is as follows. Catalyzes the ATP-dependent amination of UTP to CTP with either L-glutamine or ammonia as the source of nitrogen. Regulates intracellular CTP levels through interactions with the four ribonucleotide triphosphates. In Wigglesworthia glossinidia brevipalpis, this protein is CTP synthase.